The sequence spans 310 residues: QRTLKVSSSGPRSFSSRSFSSGPSSRISSSSYSRVGSNSSFRSGVGFGPNYGMGLGSSIGVGGITAVSVNQSLLNPLKLELDPSIQAVRTQEKEQIKTLNNKFASFIDKVRFLEQQNKILETKWSFLQQQKTSQSNLDGLFEKYITNLRRQLDSMGQEKLKLEVELGNMQGLVEDFKKKYEDEINKRTEMENEFVLIKKDVDEAYMNKVELESRLEGLTDEINFLRHLYEEEIKEMQSQISDTSVVVSMDNSRSLDLDGIIADVRAQYEEIANRSRAEAETMYQIKYEELQLLAGKHGDDLRHTKTEISE.

A disordered region spans residues 1-38 (QRTLKVSSSGPRSFSSRSFSSGPSSRISSSSYSRVGSN). A Glycyl lysine isopeptide (Lys-Gly) (interchain with G-Cter in SUMO2) cross-link involves residue lysine 5. A phosphoserine mark is found at serine 7, serine 9, serine 15, and serine 16. Over residues 7-38 (SSSGPRSFSSRSFSSGPSSRISSSSYSRVGSN) the composition is skewed to low complexity. Arginine 17 is modified (omega-N-methylarginine). Serine 18, serine 21, and serine 25 each carry phosphoserine. Arginine 26 carries the post-translational modification Omega-N-methylarginine. Residues serine 28, serine 31, and serine 33 each carry the phosphoserine modification. Position 34 is an omega-N-methylarginine (arginine 34). Residue serine 37 is modified to Phosphoserine. Arginine 42 carries the post-translational modification Asymmetric dimethylarginine; alternate. At arginine 42 the chain carries Omega-N-methylarginine; alternate. A coil 1A region spans residues 92 to 127 (EKEQIKTLNNKFASFIDKVRFLEQQNKILETKWSFL). An IF rod domain is found at 92–310 (EKEQIKTLNN…LRHTKTEISE (219 aa)). Lysine 102 carries the post-translational modification N6-malonyllysine. Glycyl lysine isopeptide (Lys-Gly) (interchain with G-Cter in SUMO2) cross-links involve residues lysine 123 and lysine 131. Residues 128–144 (QQQKTSQSNLDGLFEKY) are linker 1. Residues 145 to 236 (ITNLRRQLDS…HLYEEEIKEM (92 aa)) form a coil 1B region. Lysine 198 is covalently cross-linked (Glycyl lysine isopeptide (Lys-Gly) (interchain with G-Cter in SUMO1); alternate). A Glycyl lysine isopeptide (Lys-Gly) (interchain with G-Cter in SUMO2); alternate cross-link involves residue lysine 198. N6-acetyllysine is present on lysine 208. Tyrosine 229 carries the post-translational modification Phosphotyrosine. A linker 12 region spans residues 237 to 260 (QSQISDTSVVVSMDNSRSLDLDGI). Phosphoserine occurs at positions 254 and 275. Residues 261–310 (IADVRAQYEEIANRSRAEAETMYQIKYEELQLLAGKHGDDLRHTKTEISE) form a coil 2 region. Lysine 286 participates in a covalent cross-link: Glycyl lysine isopeptide (Lys-Gly) (interchain with G-Cter in SUMO2). Residue lysine 296 forms a Glycyl lysine isopeptide (Lys-Gly) (interchain with G-Cter in SUMO2); alternate linkage. The residue at position 296 (lysine 296) is an N6-acetyllysine; alternate. Residue lysine 305 forms a Glycyl lysine isopeptide (Lys-Gly) (interchain with G-Cter in SUMO2) linkage.

Belongs to the intermediate filament family. As to quaternary structure, heterotetramer of two type I and two type II keratins. Forms a heterodimer with KRT18. Associates with KRT20. Interacts with PNN. When associated with KRT19, interacts with DMD. Interacts with APEX1. Interacts with GPER1. Interacts with EPPK1. Interacts with PKP1 and PKP2. O-glycosylated. O-GlcNAcylation at multiple sites increases solubility, and decreases stability by inducing proteasomal degradation. In terms of processing, O-glycosylated (O-GlcNAcylated), in a cell cycle-dependent manner.

Its subcellular location is the cytoplasm. It is found in the nucleus. The protein resides in the nucleoplasm. It localises to the nucleus matrix. Its function is as follows. Together with KRT19, helps to link the contractile apparatus to dystrophin at the costameres of striated muscle. In Potorous tridactylus (Potoroo), this protein is Keratin, type II cytoskeletal 8.